The primary structure comprises 304 residues: UDP-3-O-acyl-N-acetylglucosamine deacetylase (304 aa).

Zn(2+) is bound by residues H78, H237, and D241. The Proton donor role is filled by H264.

This sequence belongs to the LpxC family. It depends on Zn(2+) as a cofactor.

It catalyses the reaction a UDP-3-O-[(3R)-3-hydroxyacyl]-N-acetyl-alpha-D-glucosamine + H2O = a UDP-3-O-[(3R)-3-hydroxyacyl]-alpha-D-glucosamine + acetate. It participates in glycolipid biosynthesis; lipid IV(A) biosynthesis; lipid IV(A) from (3R)-3-hydroxytetradecanoyl-[acyl-carrier-protein] and UDP-N-acetyl-alpha-D-glucosamine: step 2/6. Functionally, catalyzes the hydrolysis of UDP-3-O-myristoyl-N-acetylglucosamine to form UDP-3-O-myristoylglucosamine and acetate, the committed step in lipid A biosynthesis. The chain is UDP-3-O-acyl-N-acetylglucosamine deacetylase from Polynucleobacter necessarius subsp. necessarius (strain STIR1).